Here is a 275-residue protein sequence, read N- to C-terminus: NH(3)-dependent NAD(+) synthetase (275 aa).

46-53 (GISGGQDS) lines the ATP pocket. Asp52 serves as a coordination point for Mg(2+). Residue Arg140 participates in deamido-NAD(+) binding. Thr160 is a binding site for ATP. Glu165 contacts Mg(2+). Deamido-NAD(+)-binding residues include Lys173 and Asp180. ATP is bound by residues Lys189 and Thr211. Residue 260–261 (HK) participates in deamido-NAD(+) binding.

The protein belongs to the NAD synthetase family. Homodimer.

The enzyme catalyses deamido-NAD(+) + NH4(+) + ATP = AMP + diphosphate + NAD(+) + H(+). It participates in cofactor biosynthesis; NAD(+) biosynthesis; NAD(+) from deamido-NAD(+) (ammonia route): step 1/1. In terms of biological role, catalyzes the ATP-dependent amidation of deamido-NAD to form NAD. Uses ammonia as a nitrogen source. This Escherichia coli O17:K52:H18 (strain UMN026 / ExPEC) protein is NH(3)-dependent NAD(+) synthetase.